Reading from the N-terminus, the 62-residue chain is MIIAIQLLVLLLIALSTVLVVGVPVVLASPGQWEQSKGLIYTGAGLWTGLVIVTSLVNSLVV.

2 helical membrane-spanning segments follow: residues 8–28 (LVLL…VVLA) and 41–61 (YTGA…NSLV).

The protein belongs to the PsbZ family. PSII is composed of 1 copy each of membrane proteins PsbA, PsbB, PsbC, PsbD, PsbE, PsbF, PsbH, PsbI, PsbJ, PsbK, PsbL, PsbM, PsbT, PsbX, PsbY, PsbZ, Psb30/Ycf12, at least 3 peripheral proteins of the oxygen-evolving complex and a large number of cofactors. It forms dimeric complexes.

It is found in the plastid. Its subcellular location is the chloroplast thylakoid membrane. Its function is as follows. May control the interaction of photosystem II (PSII) cores with the light-harvesting antenna, regulates electron flow through the 2 photosystem reaction centers. PSII is a light-driven water plastoquinone oxidoreductase, using light energy to abstract electrons from H(2)O, generating a proton gradient subsequently used for ATP formation. In Pyropia yezoensis (Susabi-nori), this protein is Photosystem II reaction center protein Z.